A 616-amino-acid chain; its full sequence is Dihydroxy-acid dehydratase (616 aa).

Aspartate 81 is a Mg(2+) binding site. Residue cysteine 122 coordinates [2Fe-2S] cluster. The Mg(2+) site is built by aspartate 123 and lysine 124. Position 124 is an N6-carboxylysine (lysine 124). Cysteine 195 is a binding site for [2Fe-2S] cluster. Glutamate 491 contributes to the Mg(2+) binding site. The active-site Proton acceptor is the serine 517.

This sequence belongs to the IlvD/Edd family. As to quaternary structure, homodimer. The cofactor is [2Fe-2S] cluster. It depends on Mg(2+) as a cofactor.

The enzyme catalyses (2R)-2,3-dihydroxy-3-methylbutanoate = 3-methyl-2-oxobutanoate + H2O. It carries out the reaction (2R,3R)-2,3-dihydroxy-3-methylpentanoate = (S)-3-methyl-2-oxopentanoate + H2O. The protein operates within amino-acid biosynthesis; L-isoleucine biosynthesis; L-isoleucine from 2-oxobutanoate: step 3/4. Its pathway is amino-acid biosynthesis; L-valine biosynthesis; L-valine from pyruvate: step 3/4. Its function is as follows. Functions in the biosynthesis of branched-chain amino acids. Catalyzes the dehydration of (2R,3R)-2,3-dihydroxy-3-methylpentanoate (2,3-dihydroxy-3-methylvalerate) into 2-oxo-3-methylpentanoate (2-oxo-3-methylvalerate) and of (2R)-2,3-dihydroxy-3-methylbutanoate (2,3-dihydroxyisovalerate) into 2-oxo-3-methylbutanoate (2-oxoisovalerate), the penultimate precursor to L-isoleucine and L-valine, respectively. The sequence is that of Dihydroxy-acid dehydratase from Yersinia pseudotuberculosis serotype O:1b (strain IP 31758).